Consider the following 122-residue polypeptide: Small ribosomal subunit protein uS13 (122 aa).

The tract at residues 94–122 is disordered; the sequence is GLPVRGQSTQKNARTRKGPRKTVAGKKGK. Residues 106 to 122 show a composition bias toward basic residues; sequence ARTRKGPRKTVAGKKGK.

Belongs to the universal ribosomal protein uS13 family. Part of the 30S ribosomal subunit. Forms a loose heterodimer with protein S19. Forms two bridges to the 50S subunit in the 70S ribosome.

In terms of biological role, located at the top of the head of the 30S subunit, it contacts several helices of the 16S rRNA. In the 70S ribosome it contacts the 23S rRNA (bridge B1a) and protein L5 of the 50S subunit (bridge B1b), connecting the 2 subunits; these bridges are implicated in subunit movement. Contacts the tRNAs in the A and P-sites. The polypeptide is Small ribosomal subunit protein uS13 (Mycoplasmopsis synoviae (strain 53) (Mycoplasma synoviae)).